Here is a 48-residue protein sequence, read N- to C-terminus: uncharacterized protein (48 aa).

Residues 1 to 48 form a disordered region; the sequence is MVREKKNPSSAAVSAASVKGDAGPTQHYGGGKRTSQNQQYKKHNMGQS. The segment covering 9-18 has biased composition (low complexity); the sequence is SSAAVSAASV.

This is an uncharacterized protein from Bacillus subtilis (strain 168).